The chain runs to 229 residues: Transmembrane emp24 domain-containing protein 5 (229 aa).

A signal peptide spans M1 to G27. At F28–N196 the chain is on the lumenal side. The region spanning K45 to L126 is the GOLD domain. Residues F197–L217 traverse the membrane as a helical segment. Over K218–T229 the chain is Cytoplasmic.

Belongs to the EMP24/GP25L family. Interacts with TMED9 and TMED10.

The protein localises to the endoplasmic reticulum membrane. It localises to the golgi apparatus. It is found in the cis-Golgi network membrane. Its subcellular location is the endoplasmic reticulum-Golgi intermediate compartment membrane. Functionally, potential role in vesicular protein trafficking, mainly in the early secretory pathway. Required for the maintenance of the Golgi apparatus; involved in protein exchange between Golgi stacks during assembly. Probably not required for COPI-vesicle-mediated retrograde transport. The chain is Transmembrane emp24 domain-containing protein 5 (Tmed5) from Rattus norvegicus (Rat).